We begin with the raw amino-acid sequence, 415 residues long: Multifunctional CCA protein (415 aa).

The ATP site is built by Gly-8 and Arg-11. Positions 8 and 11 each coordinate CTP. Residues Asp-21 and Asp-23 each coordinate Mg(2+). 3 residues coordinate ATP: Arg-91, Arg-143, and Arg-146. CTP-binding residues include Arg-91, Arg-143, and Arg-146. Residues 232–333 (TGVHVMMVID…TRLLERCDAL (102 aa)) enclose the HD domain.

This sequence belongs to the tRNA nucleotidyltransferase/poly(A) polymerase family. Bacterial CCA-adding enzyme type 1 subfamily. Monomer. Can also form homodimers and oligomers. Mg(2+) is required as a cofactor. Ni(2+) serves as cofactor.

It carries out the reaction a tRNA precursor + 2 CTP + ATP = a tRNA with a 3' CCA end + 3 diphosphate. It catalyses the reaction a tRNA with a 3' CCA end + 2 CTP + ATP = a tRNA with a 3' CCACCA end + 3 diphosphate. In terms of biological role, catalyzes the addition and repair of the essential 3'-terminal CCA sequence in tRNAs without using a nucleic acid template. Adds these three nucleotides in the order of C, C, and A to the tRNA nucleotide-73, using CTP and ATP as substrates and producing inorganic pyrophosphate. tRNA 3'-terminal CCA addition is required both for tRNA processing and repair. Also involved in tRNA surveillance by mediating tandem CCA addition to generate a CCACCA at the 3' terminus of unstable tRNAs. While stable tRNAs receive only 3'-terminal CCA, unstable tRNAs are marked with CCACCA and rapidly degraded. The polypeptide is Multifunctional CCA protein (Cupriavidus pinatubonensis (strain JMP 134 / LMG 1197) (Cupriavidus necator (strain JMP 134))).